We begin with the raw amino-acid sequence, 423 residues long: MLDIKKIRADFDGVAAKLATRGVEKEKLEKLHDLDIKRRELIVKSEALKAERNSVSDEISQVKRAKGDASTQIAAMQKVSAEIKAIDAELAEIEENLNEIIIMLPNLPHESTPIGADEDDNVEVRRVGQTPTFNFEPKAHWDLGEDLGILDWERGGKVTGSRFLFYKGAGARLERALYNFMLDEHGKEGYTEMITPYMVNQESMFGTGQYPKFKEDTFELKDDRGFVLIPTAEVPLTNYYRGEILDGSELPIKFTAMSPSFRSEAGSAGRDTRGLIRLHQFHKVEMVKFAKPDQSYDELEKMTANAENILQKLGLAYRVVALSTGDMGFSAAKTYDLEVWIPAQNTYREISSCSNCEDFQARRAQIRYRDEDGKVQLLHTLNGSGLAVGRTVAAILENYQNEDGSITVPEILRPYMGGLEVIK.

231–233 (TAE) contributes to the L-serine binding site. 262-264 (RSE) provides a ligand contact to ATP. Position 285 (glutamate 285) interacts with L-serine. Position 349-352 (349-352 (EISS)) interacts with ATP. Serine 384 lines the L-serine pocket.

Belongs to the class-II aminoacyl-tRNA synthetase family. Type-1 seryl-tRNA synthetase subfamily. In terms of assembly, homodimer. The tRNA molecule binds across the dimer.

It localises to the cytoplasm. The enzyme catalyses tRNA(Ser) + L-serine + ATP = L-seryl-tRNA(Ser) + AMP + diphosphate + H(+). The catalysed reaction is tRNA(Sec) + L-serine + ATP = L-seryl-tRNA(Sec) + AMP + diphosphate + H(+). The protein operates within aminoacyl-tRNA biosynthesis; selenocysteinyl-tRNA(Sec) biosynthesis; L-seryl-tRNA(Sec) from L-serine and tRNA(Sec): step 1/1. In terms of biological role, catalyzes the attachment of serine to tRNA(Ser). Is also able to aminoacylate tRNA(Sec) with serine, to form the misacylated tRNA L-seryl-tRNA(Sec), which will be further converted into selenocysteinyl-tRNA(Sec). This is Serine--tRNA ligase from Lactococcus lactis subsp. cremoris (strain MG1363).